The sequence spans 692 residues: Elongation factor G (692 aa).

The tr-type G domain occupies 8-282; it reads AKTRNIGIMA…AVIAYLPSPL (275 aa). GTP contacts are provided by residues 17 to 24, 81 to 85, and 135 to 138; these read AHVDAGKT, DTPGH, and NKMD.

This sequence belongs to the TRAFAC class translation factor GTPase superfamily. Classic translation factor GTPase family. EF-G/EF-2 subfamily.

The protein resides in the cytoplasm. Functionally, catalyzes the GTP-dependent ribosomal translocation step during translation elongation. During this step, the ribosome changes from the pre-translocational (PRE) to the post-translocational (POST) state as the newly formed A-site-bound peptidyl-tRNA and P-site-bound deacylated tRNA move to the P and E sites, respectively. Catalyzes the coordinated movement of the two tRNA molecules, the mRNA and conformational changes in the ribosome. This Streptococcus pyogenes serotype M49 (strain NZ131) protein is Elongation factor G.